The primary structure comprises 74 residues: Anaphase-promoting complex subunit 13 (74 aa).

Belongs to the APC13 family. The APC/C is composed of at least 12 subunits.

The protein localises to the nucleus. The protein operates within protein modification; protein ubiquitination. Component of the anaphase promoting complex/cyclosome (APC/C), a cell cycle-regulated E3 ubiquitin ligase that controls progression through mitosis and the G1 phase of the cell cycle. The APC/C complex acts by mediating ubiquitination and subsequent degradation of target proteins: it mainly mediates the formation of 'Lys-11'-linked polyubiquitin chains and, to a lower extent, the formation of 'Lys-48'- and 'Lys-63'-linked polyubiquitin chains. The APC/C complex catalyzes assembly of branched 'Lys-11'-/'Lys-48'-linked branched ubiquitin chains on target proteins. In Xenopus tropicalis (Western clawed frog), this protein is Anaphase-promoting complex subunit 13 (anapc13).